We begin with the raw amino-acid sequence, 451 residues long: Epi-neemfruitin B 7-O-acetyltransferse L7AT (451 aa).

Residues H165 and D384 each act as proton acceptor in the active site.

It belongs to the plant acyltransferase family. In terms of assembly, monomer. Mainly expressed in petioles and, to a lower extent, in roots.

The enzyme catalyses epi-neemfruitin B + acetyl-CoA = 7-acetyl-epi-neemfruitin B + CoA. Its pathway is secondary metabolite biosynthesis; terpenoid biosynthesis. Functionally, acetyltransferase involved in the biosynthesis of limonoids triterpene natural products such as azadirachtin, an antifeedant widely used as bioinsecticide, and possessing many medicinal applications including anti-tumoral, anti-malarial, anti-rheumatic, antibacterial, anti-inflammatory, anti-pyretic and diuretic effects. Catalyzes the formation of 7-acetyl-epi-neemfruitin B from epi-neemfruitin B. The sequence is that of Epi-neemfruitin B 7-O-acetyltransferse L7AT from Melia azedarach (Chinaberry tree).